The primary structure comprises 80 residues: Cell division activator CedA (80 aa).

This sequence belongs to the CedA family.

Activates the cell division inhibited by chromosomal DNA over-replication. This chain is Cell division activator CedA, found in Escherichia coli (strain SMS-3-5 / SECEC).